The following is a 428-amino-acid chain: Enolase 3 (428 aa).

(2R)-2-phosphoglycerate is bound at residue Gln-163. Catalysis depends on Glu-205, which acts as the Proton donor. Positions 242, 286, and 313 each coordinate Mg(2+). Positions 338, 367, 368, and 389 each coordinate (2R)-2-phosphoglycerate. Catalysis depends on Lys-338, which acts as the Proton acceptor.

This sequence belongs to the enolase family. Requires Mg(2+) as cofactor.

The protein resides in the cytoplasm. Its subcellular location is the secreted. It localises to the cell surface. The catalysed reaction is (2R)-2-phosphoglycerate = phosphoenolpyruvate + H2O. The protein operates within carbohydrate degradation; glycolysis; pyruvate from D-glyceraldehyde 3-phosphate: step 4/5. Its function is as follows. Catalyzes the reversible conversion of 2-phosphoglycerate (2-PG) into phosphoenolpyruvate (PEP). It is essential for the degradation of carbohydrates via glycolysis. The sequence is that of Enolase 3 from Lactobacillus johnsonii (strain CNCM I-12250 / La1 / NCC 533).